A 307-amino-acid chain; its full sequence is MSKHVAVLMGGWSSEREISLRSGNACAEALEGEGYRVTRVNVGPDIATVLTELRPDAALNALHGPAGEDGTIQGLLEILKIPYTHSGVLASALAMHKERAKTVMRAAGVSVPEGRVVNRHDAAKSHPLTPPYVVKPIAEGSSMGVIIVRDERSHPPQILASDEWVYGEEVLAETYVAGRELTCAVLGDRALGVTEIKPVSGEWYDFDAKYAGGGSIHVLPADLKLNIYQRVQELALTAHQALGCRGVSRADLRYDDTPGGTGALVVLEVNTQPGMTQTSLVPEIAAHAGQSFGELVRWMVEDASLNR.

The ATP-grasp domain occupies 101–301 (KTVMRAAGVS…FGELVRWMVE (201 aa)). 127–182 (PLTPPYVVKPIAEGSSMGVIIVRDERSHPPQILASDEWVYGEEVLAETYVAGRELT) contacts ATP. Positions 251, 268, and 270 each coordinate Mg(2+).

Belongs to the D-alanine--D-alanine ligase family. It depends on Mg(2+) as a cofactor. Mn(2+) is required as a cofactor.

The protein resides in the cytoplasm. The enzyme catalyses 2 D-alanine + ATP = D-alanyl-D-alanine + ADP + phosphate + H(+). It functions in the pathway cell wall biogenesis; peptidoglycan biosynthesis. Cell wall formation. The sequence is that of D-alanine--D-alanine ligase from Methylorubrum extorquens (strain PA1) (Methylobacterium extorquens).